A 737-amino-acid chain; its full sequence is Polyribonucleotide nucleotidyltransferase (737 aa).

Positions 489 and 495 each coordinate Mg(2+). The region spanning 556–615 (PKIDTIKIDVDKIKIVIGKGGETIDKIIAETGVKIDIDEEGNVSIYSSDQDAINRAKEII) is the KH domain. The 69-residue stretch at 625-693 (DEVYRAKVVR…EKGRVDASMK (69 aa)) folds into the S1 motif domain. The segment at 691-737 (SMKALLPRPPKPERDEKGEKSERPYRPRHHKDHKPKKEITETPKDSE) is disordered. Basic and acidic residues-rich tracts occupy residues 700–715 (PKPERDEKGEKSERPY) and 725–737 (PKKEITETPKDSE).

The protein belongs to the polyribonucleotide nucleotidyltransferase family. It depends on Mg(2+) as a cofactor.

The protein resides in the cytoplasm. The catalysed reaction is RNA(n+1) + phosphate = RNA(n) + a ribonucleoside 5'-diphosphate. In terms of biological role, involved in mRNA degradation. Catalyzes the phosphorolysis of single-stranded polyribonucleotides processively in the 3'- to 5'-direction. The chain is Polyribonucleotide nucleotidyltransferase from Streptococcus pneumoniae (strain Hungary19A-6).